Here is a 199-residue protein sequence, read N- to C-terminus: dITP/XTP pyrophosphatase (199 aa).

A substrate-binding site is contributed by 7 to 12 (TSNRGK). Asp74 (proton acceptor) is an active-site residue. A Mg(2+)-binding site is contributed by Asp74. Substrate is bound by residues Ser75, 156-159 (FGYD), Lys179, and 184-185 (HR).

The protein belongs to the HAM1 NTPase family. Homodimer. Mg(2+) is required as a cofactor.

The enzyme catalyses XTP + H2O = XMP + diphosphate + H(+). It carries out the reaction dITP + H2O = dIMP + diphosphate + H(+). The catalysed reaction is ITP + H2O = IMP + diphosphate + H(+). Its function is as follows. Pyrophosphatase that catalyzes the hydrolysis of nucleoside triphosphates to their monophosphate derivatives, with a high preference for the non-canonical purine nucleotides XTP (xanthosine triphosphate), dITP (deoxyinosine triphosphate) and ITP. Seems to function as a house-cleaning enzyme that removes non-canonical purine nucleotides from the nucleotide pool, thus preventing their incorporation into DNA/RNA and avoiding chromosomal lesions. This chain is dITP/XTP pyrophosphatase, found in Sulfurimonas denitrificans (strain ATCC 33889 / DSM 1251) (Thiomicrospira denitrificans (strain ATCC 33889 / DSM 1251)).